A 106-amino-acid chain; its full sequence is PAT complex subunit Asterix (106 aa).

The tract at residues 1 to 29 (MSTNNMSDPRRPNKVLRYKPPPSECNPAL) is disordered. The residue at position 2 (serine 2) is an N-acetylserine. Residues 2–32 (STNNMSDPRRPNKVLRYKPPPSECNPALDDP) are Cytoplasmic-facing. Residues 33–51 (TPDYMNLLGMIFSMCGLML) form a helical membrane-spanning segment. Position 52 (lysine 52) is a topological domain, lumenal. The chain crosses the membrane as a helical span at residues 53-70 (LKWCAWVAVYCSFISFAN). The Cytoplasmic portion of the chain corresponds to 71–74 (SRSS). A helical transmembrane segment spans residues 75-95 (EDTKQMMSSFMLSISAVVMSY). Residues 96-106 (LQNPQPMTPPW) are Lumenal-facing.

This sequence belongs to the Asterix family. As to quaternary structure, component of the PAT complex, composed of WDR83OS/Asterix and CCDC47. The PAT complex is part of the multi-pass translocon (MPT) complex, composed of three subcomplexes, the GEL complex (composed of RAB5IF/OPTI and TMCO1), the BOS complex (composed of NCLN/Nicalin, NOMO1 and TMEM147) and the PAT complex (composed of WDR83OS/Asterix and CCDC47). The MPT complex associates with the SEC61 complex.

The protein localises to the endoplasmic reticulum membrane. In terms of biological role, component of the multi-pass translocon (MPT) complex that mediates insertion of multi-pass membrane proteins into the lipid bilayer of membranes. The MPT complex takes over after the SEC61 complex: following membrane insertion of the first few transmembrane segments of proteins by the SEC61 complex, the MPT complex occludes the lateral gate of the SEC61 complex to promote insertion of subsequent transmembrane regions. Within the MPT complex, the PAT subcomplex sequesters any highly polar regions in the transmembrane domains away from the non-polar membrane environment until they can be buried in the interior of the fully assembled protein. Within the PAT subcomplex, WDR83OS/Asterix binds to and redirects the substrate to a location behind the SEC61 complex. This Canis lupus familiaris (Dog) protein is PAT complex subunit Asterix (WDR83OS).